The primary structure comprises 171 residues: MSDFKRSKANNNTEELIEKIVFINRVAKVVKGGRRFSFSAIVVVGDGNGKVGYGLGKANQVPEAIRKGVERARKDMALVSLTDVSIPHQVIGHYGAGRVFLRPASAGTGLIAGGPVRAVLEAAGVSNILTKCLGSHNPHNMVKATIDGLKQLRSAQKIAELRGKNVEEITA.

The 64-residue stretch at 16-79 (LIEKIVFINR…ERARKDMALV (64 aa)) folds into the S5 DRBM domain.

This sequence belongs to the universal ribosomal protein uS5 family. Part of the 30S ribosomal subunit. Contacts proteins S4 and S8.

Functionally, with S4 and S12 plays an important role in translational accuracy. Located at the back of the 30S subunit body where it stabilizes the conformation of the head with respect to the body. The sequence is that of Small ribosomal subunit protein uS5 from Desulfotalea psychrophila (strain LSv54 / DSM 12343).